Consider the following 341-residue polypeptide: MSEQHSPIISVQDVSKKLGDHILLSKVSFSVYPGEVFGIVGHSGSGKTTLLRCLDFLDMPTSGSISVAGFDNSLPTQKFSRRNFSKKVAYISQNYGLFSSKTVFENIAYPLRIHHSEMSKSEVEEQVYDTLNFLNLYHRHDAYPGNLSGGQKQKVAIARAIVCQPEVVLCDEITSALDPKSTENIIERLLQLNQERGITLVLVSHEIDVVKKICSHVLVMHQGAVEELGTTEELFLNSENSITNELFHEDINIAALSSCYFAEDREEVLRLNFSKELAIQGIISKVIQTGLVSINILSGNINLFRKSPMGFLIIVLEGEVEQRKKAKELLIELGVVIKEFY.

The ABC transporter domain occupies isoleucine 9–phenylalanine 247. Position 41 to 48 (glycine 41 to threonine 48) interacts with ATP.

Belongs to the ABC transporter superfamily. Methionine importer (TC 3.A.1.24) family. As to quaternary structure, the complex is composed of two ATP-binding proteins (MetN), two transmembrane proteins (MetI) and a solute-binding protein (MetQ).

It is found in the cell inner membrane. The enzyme catalyses L-methionine(out) + ATP + H2O = L-methionine(in) + ADP + phosphate + H(+). It carries out the reaction D-methionine(out) + ATP + H2O = D-methionine(in) + ADP + phosphate + H(+). Part of the ABC transporter complex MetNIQ involved in methionine import. Responsible for energy coupling to the transport system. The chain is Methionine import ATP-binding protein MetN from Chlamydia pneumoniae (Chlamydophila pneumoniae).